We begin with the raw amino-acid sequence, 346 residues long: PPE family protein PPE17 (346 aa).

The interval phenylalanine 6–alanine 159 is PPE.

The protein belongs to the mycobacterial PPE family. Interacts with LRR motifs 15-20 of host Toll-like receptor 2 (TLR2).

Its subcellular location is the secreted. It localises to the cell wall. The protein localises to the cell surface. Its function is as follows. Induces pro-inflammatory responses. Induces host TLR1/2 heterodimerization, which causes an increased recruitment of IRAK1, MYD88, and protein kinase C epsilon (PRKCE) to the downstream TLR-signaling complex that translocates PRKCE into the nucleus in an IRAK1-dependent manner. PRKCE-mediated phosphorylation allowed the nuclear IRAK3 to be exported to the cytoplasm, leading to increased activation of ERK1/2, stabilization of MAPK phosphatase 1 (MKP1), and induction of TNF-alpha with concomitant down-regulation of MAP kinase p38. During M.tuberculosis and HIV-1 co-infection, can stimulate transcription from the long terminal repeat (LTR) of HIV-1 in monocyte/macrophage cells. Interaction with human TLR2 activates the NF-kappa-B transcription factor, which binds to the promoter region of the HIV-1 and induces HIV-1 gene expression. The sequence is that of PPE family protein PPE17 (PPE17) from Mycobacterium tuberculosis (strain ATCC 25618 / H37Rv).